Reading from the N-terminus, the 647-residue chain is Auxin efflux carrier component 2 (647 aa).

Topologically, residues 1-7 (MITGKDM) are extracellular. The chain crosses the membrane as a helical span at residues 8 to 28 (YDVLAAMVPLYVAMILAYGSV). Over 29–38 (RWWGIFTPDQ) the chain is Cytoplasmic. The chain crosses the membrane as a helical span at residues 39-59 (CSGINRFVAVFAVPLLSFHFI). (indol-3-yl)acetate is bound at residue Val51. The Extracellular portion of the chain corresponds to 60-68 (SSNDPYAMN). Residues 69-89 (YHFLAADSLQKVVILAALFLW) form a helical membrane-spanning segment. At 90–100 (QAFSRRGSLEW) the chain is on the cytoplasmic side. A helical transmembrane segment spans residues 101–121 (MITLFSLSTLPNTLVMGIPLL). (indol-3-yl)acetate contacts are provided by Asn112 and Leu114. The Extracellular segment spans residues 122 to 131 (RAMYGDFSGN). The helical transmembrane segment at 132-152 (LMVQIVVLQSIIWYTLMLFLF) threads the bilayer. (indol-3-yl)acetate is bound at residue Tyr145. The Cytoplasmic segment spans residues 153 to 507 (EFRGAKLLIS…LIRNPNTYSS (355 aa)). A phosphoserine mark is found at Ser237, Ser258, and Ser310. Residues 339–380 (SVPSYPPPNPMFTGSTSGASGVKKKESGGGGSGGGVGVGGQN) are disordered. At Thr354 the chain carries Phosphothreonine. Residues 366–378 (GGGGSGGGVGVGG) are compositionally biased toward gly residues. Position 393 is a phosphoserine (Ser393). Disordered regions lie at residues 397–420 (EANAKNAMTRGSSTDVSTDPKVSI) and 440–481 (PGRK…QQMP). Residues 508–528 (LFGLAWSLVSFKWNIKMPTIM) form a helical membrane-spanning segment. At 529-531 (SGS) the chain is on the extracellular side. Residues 532–552 (ISILSDAGLGMAMFSLGLFMA) form a helical membrane-spanning segment. Over 553 to 568 (LQPKIIACGKSVAGFA) the chain is Cytoplasmic. Residues 569–589 (MAVRFLTGPAVIAATSIAIGI) traverse the membrane as a helical segment. The Extracellular segment spans residues 590–592 (RGD). A helical transmembrane segment spans residues 593–613 (LLHIAIVQAALPQGIVPFVFA). 2 residues coordinate (indol-3-yl)acetate: Ile607 and Val608. Residues 614 to 626 (KEYNVHPDILSTA) are Cytoplasmic-facing. The helical transmembrane segment at 627–647 (VIFGMLVALPVTVLYYVLLGL) threads the bilayer.

This sequence belongs to the auxin efflux carrier (TC 2.A.69.1) family. Homodimer. Interacts with FYPP1 and FYPP3. Component of a complex made of PINs (e.g. PIN1 and PIN2), MAB4/MELs (e.g. NPY1/MAB4 and NPY5/MEL1) and AGC kinases (e.g. D6PK and PID) at the plasma membrane. Binds directly to NPY1/MAB4, NPY5/MEL1 and PID. As to expression, root-specific. Localized to the cortex, epidermis and lateral root cap, predominantly at the upper side of cells.

The protein localises to the cell membrane. Acts as a component of the auxin efflux carrier. Seems to be involved in the root-specific auxin transport, and mediates the root gravitropism. Its particular localization suggests a role in the translocation of auxin towards the elongation zone. Recrutes NPY proteins (e.g. NPY1/MAB4 and NPY5/MEL1) to the plasma membrane in a polar basal localization in root epidermis; this activity is optimized by AGC kinases-mediated (e.g. D6PK and PID) phosphorylation that limits their lateral diffusion-based escape. The sequence is that of Auxin efflux carrier component 2 from Arabidopsis thaliana (Mouse-ear cress).